The primary structure comprises 788 residues: E3 ubiquitin-protein ligase SspH2 (788 aa).

Positions 1-481 are interaction with host membrane and with target proteins; it reads MPFHIGSGCL…PGYSGPIIRF (481 aa). 12 LRR repeats span residues 223-242, 243-264, 265-282, 283-302, 303-324, 325-342, 343-364, 365-382, 383-404, 405-422, 423-445, and 446-466; these read HITTLVIPDNNLTSLPALPP, ELRTLEVSGNQLTSLPVLPPGL, LELSIFSNPLTHLPALPS, GLCKLWIFGNQLTSLPVLPP, GLQELSVSDNQLASLPALPSEL, CKLWAYNNQLTSLPMLPS, GLQELSVSDNQLASLPTLPSEL, YKLWAYNNRLTSLPALPS, GLKELIVSGNRLTSLPVLPSEL, KELMVSGNRLTSLPMLPS, GLLSLSVYRNQLTRLPESLIHLS, and SETTVNLEGNPLSERTLQALR. The tract at residues 482–491 is linker; that stretch reads DMAGASAPRE. The segment at 492-788 is E3 ubiquitin-protein ligase catalytic domain; the sequence is TRALHLAAAD…SYLNVQWRRN (297 aa). One can recognise an NEL domain in the interval 494-788; sequence ALHLAAADWL…SYLNVQWRRN (295 aa). Cysteine 580 functions as the Glycyl thioester intermediate in the catalytic mechanism.

This sequence belongs to the LRR-containing bacterial E3 ligase family. Ubiquitinated in the presence of host E1 ubiquitin-activating enzyme UBA1, E2 ubiquitin-conjugating enzyme UBE2D2 and ubiquitin.

It is found in the secreted. The protein localises to the host cytoplasm. The protein resides in the host apical cell membrane. The enzyme catalyses S-ubiquitinyl-[E2 ubiquitin-conjugating enzyme]-L-cysteine + [acceptor protein]-L-lysine = [E2 ubiquitin-conjugating enzyme]-L-cysteine + N(6)-ubiquitinyl-[acceptor protein]-L-lysine.. With respect to regulation, exists in an autoinhibited state in the absence of substrate protein, due to interactions of the leucine-rich repeat domain with the catalytic domain. Is activated upon binding to a substrate protein. Functionally, effector proteins function to alter host cell physiology and promote bacterial survival in host tissues. This protein is an E3 ubiquitin ligase that interferes with host's ubiquitination pathway. The protein is E3 ubiquitin-protein ligase SspH2 (sspH2) of Salmonella typhimurium (strain LT2 / SGSC1412 / ATCC 700720).